We begin with the raw amino-acid sequence, 346 residues long: Uroporphyrinogen decarboxylase (346 aa).

Residues 23-27 (RQAGR), aspartate 72, tyrosine 155, serine 209, and histidine 322 each bind substrate.

The protein belongs to the uroporphyrinogen decarboxylase family. In terms of assembly, homodimer.

Its subcellular location is the cytoplasm. The enzyme catalyses uroporphyrinogen III + 4 H(+) = coproporphyrinogen III + 4 CO2. It functions in the pathway porphyrin-containing compound metabolism; protoporphyrin-IX biosynthesis; coproporphyrinogen-III from 5-aminolevulinate: step 4/4. Its function is as follows. Catalyzes the decarboxylation of four acetate groups of uroporphyrinogen-III to yield coproporphyrinogen-III. This is Uroporphyrinogen decarboxylase from Anaeromyxobacter sp. (strain Fw109-5).